The primary structure comprises 166 residues: uncharacterized protein (166 aa).

4Fe-4S ferredoxin-type domains are found at residues 3 to 33 (MKKIIMTNFNCDNCGDCVKACMEKNKVGRIA), 37 to 67 (KDGKYIPIVCQHCASAPCKEVCPVSAIEHKD), and 68 to 97 (GYVYLNEDVCIGCGLCALACPFGAILMEDK). 16 residues coordinate [4Fe-4S] cluster: Cys-13, Cys-16, Cys-19, Cys-23, Cys-46, Cys-49, Cys-54, Cys-58, Cys-77, Cys-80, Cys-83, Cys-87, Cys-101, Cys-104, Cys-111, and Cys-115.

[4Fe-4S] cluster is required as a cofactor.

This is an uncharacterized protein from Methanocaldococcus jannaschii (strain ATCC 43067 / DSM 2661 / JAL-1 / JCM 10045 / NBRC 100440) (Methanococcus jannaschii).